Reading from the N-terminus, the 369-residue chain is Cyclic AMP receptor-like protein A (369 aa).

Topologically, residues 1 to 4 (MIQI) are extracellular. The helical transmembrane segment at 5–22 (LLSTFISFIIIIVSSNDI) threads the bilayer. The Cytoplasmic portion of the chain corresponds to 23–72 (RSGENDNFNNNKMINNFLTTITTNDTIIIKETESPNDYDFSKEQIESLDK). Residues 73 to 93 (IVYFSSTMGIVGALFIIVSFF) form a helical membrane-spanning segment. The Extracellular segment spans residues 94–100 (LFKAART). A helical transmembrane segment spans residues 101-121 (FATKMIFFLSLSDLFAAIFYL). At 122-146 (PYYRDSDIMCNLQGMGLVFFLSSSY) the chain is on the cytoplasmic side. Residues 147 to 167 (LWTMCISISLFMVFFTTIFEL) traverse the membrane as a helical segment. Over 168–173 (NHWFKY) the chain is Extracellular. The chain crosses the membrane as a helical span at residues 174–194 (FHFICWGIPLFTAIISLIFHA). At 195-212 (YGKTGSWCFISDPTSIFR) the chain is on the cytoplasmic side. Residues 213–233 (LLYYLPLIVVFFINLVVFIAI) form a helical membrane-spanning segment. Residues 234-247 (RWKISQHSNSLVSR) lie on the Extracellular side of the membrane. A helical transmembrane segment spans residues 248–268 (VNIIVSFYLIAFSLSQLPTII). Over 269–369 (NSIQNFSDPD…KLIIDDYNRV (101 aa)) the chain is Cytoplasmic.

It belongs to the G-protein coupled receptor 5 family.

Its subcellular location is the membrane. Receptor for cAMP which may play a role in prestalk cell differentiation. May act as a negative regulator of cell growth. The protein is Cyclic AMP receptor-like protein A (crlA) of Dictyostelium discoideum (Social amoeba).